The primary structure comprises 96 residues: UPF0235 protein VIBHAR_03581 (96 aa).

Belongs to the UPF0235 family.

This is UPF0235 protein VIBHAR_03581 from Vibrio campbellii (strain ATCC BAA-1116).